A 248-amino-acid chain; its full sequence is DNA repair protein RecO (248 aa).

Belongs to the RecO family.

Its function is as follows. Involved in DNA repair and RecF pathway recombination. This chain is DNA repair protein RecO, found in Thermoanaerobacter sp. (strain X514).